The chain runs to 338 residues: Glycerol-3-phosphate dehydrogenase [NAD(P)+] (338 aa).

The NADPH site is built by Trp-14, Tyr-50, and Lys-110. Positions 110, 141, and 143 each coordinate sn-glycerol 3-phosphate. Residue Ala-145 participates in NADPH binding. Lys-196, Asp-249, Ser-259, Arg-260, and Asn-261 together coordinate sn-glycerol 3-phosphate. Lys-196 acts as the Proton acceptor in catalysis. Arg-260 contributes to the NADPH binding site. NADPH is bound at residue Glu-285.

It belongs to the NAD-dependent glycerol-3-phosphate dehydrogenase family.

The protein localises to the cytoplasm. It carries out the reaction sn-glycerol 3-phosphate + NAD(+) = dihydroxyacetone phosphate + NADH + H(+). It catalyses the reaction sn-glycerol 3-phosphate + NADP(+) = dihydroxyacetone phosphate + NADPH + H(+). The protein operates within membrane lipid metabolism; glycerophospholipid metabolism. Its function is as follows. Catalyzes the reduction of the glycolytic intermediate dihydroxyacetone phosphate (DHAP) to sn-glycerol 3-phosphate (G3P), the key precursor for phospholipid synthesis. The sequence is that of Glycerol-3-phosphate dehydrogenase [NAD(P)+] from Malacoplasma penetrans (strain HF-2) (Mycoplasma penetrans).